The following is a 122-amino-acid chain: MIHPETNLDVADNSGARRVQCIKVLGGSKRKTASVGDVIVVSVKEAIPRGKVKKGDVHQAVIVRTSYPVRRADGSAIRFDKNAAVLLNKQQEPIGTRIFGPVVRELRARKFMKIISLAPEVL.

This sequence belongs to the universal ribosomal protein uL14 family. Part of the 50S ribosomal subunit. Forms a cluster with proteins L3 and L19. In the 70S ribosome, L14 and L19 interact and together make contacts with the 16S rRNA in bridges B5 and B8.

In terms of biological role, binds to 23S rRNA. Forms part of two intersubunit bridges in the 70S ribosome. The sequence is that of Large ribosomal subunit protein uL14 from Gluconobacter oxydans (strain 621H) (Gluconobacter suboxydans).